The chain runs to 364 residues: UDP-N-acetylglucosamine--N-acetylmuramyl-(pentapeptide) pyrophosphoryl-undecaprenol N-acetylglucosamine transferase (364 aa).

UDP-N-acetyl-alpha-D-glucosamine-binding positions include 10–12 (TGG), asparagine 128, arginine 170, serine 199, isoleucine 250, and glutamine 295.

This sequence belongs to the glycosyltransferase 28 family. MurG subfamily.

It localises to the cell inner membrane. The enzyme catalyses di-trans,octa-cis-undecaprenyl diphospho-N-acetyl-alpha-D-muramoyl-L-alanyl-D-glutamyl-meso-2,6-diaminopimeloyl-D-alanyl-D-alanine + UDP-N-acetyl-alpha-D-glucosamine = di-trans,octa-cis-undecaprenyl diphospho-[N-acetyl-alpha-D-glucosaminyl-(1-&gt;4)]-N-acetyl-alpha-D-muramoyl-L-alanyl-D-glutamyl-meso-2,6-diaminopimeloyl-D-alanyl-D-alanine + UDP + H(+). It participates in cell wall biogenesis; peptidoglycan biosynthesis. In terms of biological role, cell wall formation. Catalyzes the transfer of a GlcNAc subunit on undecaprenyl-pyrophosphoryl-MurNAc-pentapeptide (lipid intermediate I) to form undecaprenyl-pyrophosphoryl-MurNAc-(pentapeptide)GlcNAc (lipid intermediate II). This chain is UDP-N-acetylglucosamine--N-acetylmuramyl-(pentapeptide) pyrophosphoryl-undecaprenol N-acetylglucosamine transferase, found in Chlorobium limicola (strain DSM 245 / NBRC 103803 / 6330).